Here is a 39-residue protein sequence, read N- to C-terminus: Cytochrome b559 subunit beta (39 aa).

Residues 14–30 traverse the membrane as a helical segment; that stretch reads WLAVHGLAIPTVSFLGS. Heme is bound at residue histidine 18.

Belongs to the PsbE/PsbF family. As to quaternary structure, heterodimer of an alpha subunit and a beta subunit. PSII is composed of 1 copy each of membrane proteins PsbA, PsbB, PsbC, PsbD, PsbE, PsbF, PsbH, PsbI, PsbJ, PsbK, PsbL, PsbM, PsbT, PsbX, PsbY, PsbZ, Psb30/Ycf12, at least 3 peripheral proteins of the oxygen-evolving complex and a large number of cofactors. It forms dimeric complexes. Requires heme b as cofactor.

Its subcellular location is the plastid. It localises to the chloroplast thylakoid membrane. In terms of biological role, this b-type cytochrome is tightly associated with the reaction center of photosystem II (PSII). PSII is a light-driven water:plastoquinone oxidoreductase that uses light energy to abstract electrons from H(2)O, generating O(2) and a proton gradient subsequently used for ATP formation. It consists of a core antenna complex that captures photons, and an electron transfer chain that converts photonic excitation into a charge separation. This Beta vulgaris (Sugar beet) protein is Cytochrome b559 subunit beta.